A 579-amino-acid polypeptide reads, in one-letter code: MSEIPATDATAPAEKKDFIRQIVREDLASGKHTAIRTRFPPEPNGYLHIGHAKAICLDFGLAAEFGGLCNLRLDDTNPAKEDPEFVVAIQDDVRWLGFEWAQLRHASDYFEVYYLAAEKLIRDGHAFVCDLSAEQVRQYRGTLTEPGRNSPFRERSVDENLDLFRRMRAGEFPDGARTLRAKIDMASGNINLRDPALYRIKHVEHQNTGNAWPIYPMYDFAHSLGDAVEGITHSLCTLEFEDHRPLYDWCVDKVDLSGHPELLAPLLGKGYPKEAAKPRQIEFSRLNINYTVMSKRKLTALVEEQLVDGWDDPRMYTLQGLRRRGYTPAAMRLFVDRVGISKQNSVIDFSVLEGCLREDLDAAAARRMAVIDPLKLVLTNLPEGHTETLQFSNHPKDESFGTREVPFARELWIEREDFAEVPPKGWKRLVPGGEIRLRGAGIARVDEVIKDAAGEIVELRGWLDPESRPGMIGSNRKVKGTIHWVSAVHAVEAEIRLYDRLFSVEKPDDESEGKTYRDYLNPESKRSVRGYVEPSAAQAAPEQAFQFERTGYFVADRRDHSAATPAFNRSVTLRDTWAK.

The 'HIGH' region signature appears at 41 to 51 (PEPNGYLHIGH). Residues 42-44 (EPN) and 48-54 (HIGHAKA) contribute to the ATP site. L-glutamine-binding residues include Asp-74 and Tyr-218. Residues Thr-237, 285–286 (RL), and 293–295 (MSK) each bind ATP. The short motif at 292-296 (VMSKR) is the 'KMSKS' region element.

It belongs to the class-I aminoacyl-tRNA synthetase family. Monomer.

The protein resides in the cytoplasm. The catalysed reaction is tRNA(Gln) + L-glutamine + ATP = L-glutaminyl-tRNA(Gln) + AMP + diphosphate. This is Glutamine--tRNA ligase from Xanthomonas campestris pv. campestris (strain 8004).